A 273-amino-acid polypeptide reads, in one-letter code: Transposon Tn7 transposition protein TnsA (273 aa).

Catalysis depends on residues Glu63 and Glu73. A DNA-binding region (H-T-H motif) is located at residues 90–108 (TRQIAIDSGIKHPVIRGVD). Asp114 is a catalytic residue. Residues Asp114, Gln130, and Val131 each contribute to the Mg(2+) site. Lys132 is an active-site residue.

As to quaternary structure, heteromer with TnsB. Interacts with TnsC (via C-terminus); this interaction allows TnsA to bind donor DNA. It depends on Mg(2+) as a cofactor. Requires Mn(2+) as cofactor.

Required for Tn7 transposition. Forms the transposase, together with TnsB. TnsA executes the 5'-DNA strand breakage reaction. TnsABC and TnsD promote high-frequency insertion of Tn7 into a specific target site known as att-Tn7 whereas TnsABC and TnsE promote low-frequency insertion into many different sites. This chain is Transposon Tn7 transposition protein TnsA, found in Escherichia coli.